A 358-amino-acid polypeptide reads, in one-letter code: Triacylglycerol lipase (358 aa).

Positions 1–39 (MVRSMRSRVAARAVAWALAVMPLAGAAGLTMAASPAAVA) are cleaved as a signal peptide. In terms of domain architecture, AB hydrolase-1 spans 48–327 (YPVILVHGLA…TSYHWNHLDE (280 aa)). Residue Leu-56 coordinates substrate. Catalysis depends on Ser-126, which acts as the Nucleophile. Gln-127 is a binding site for substrate. A disulfide bridge links Cys-229 with Cys-308. Asp-280 is a Ca(2+) binding site. Residues Asp-302 and His-324 each act as charge relay system in the active site. Asp-326, Gln-330, and Val-334 together coordinate Ca(2+).

The protein belongs to the AB hydrolase superfamily. Pseudomonas lipase family. As to quaternary structure, monomer. Interacts with lipase-specific foldase Lif. Ca(2+) is required as a cofactor.

Its subcellular location is the secreted. It carries out the reaction a triacylglycerol + H2O = a diacylglycerol + a fatty acid + H(+). Functionally, catalyzes the hydrolysis of triacylglycerol. This is Triacylglycerol lipase from Burkholderia plantarii.